Here is a 320-residue protein sequence, read N- to C-terminus: tRNA U34 carboxymethyltransferase (320 aa).

Carboxy-S-adenosyl-L-methionine-binding positions include K89, W103, K108, G128, 150–152 (DPT), 179–180 (IE), M194, Y198, and R313.

The protein belongs to the class I-like SAM-binding methyltransferase superfamily. CmoB family. As to quaternary structure, homotetramer.

It carries out the reaction carboxy-S-adenosyl-L-methionine + 5-hydroxyuridine(34) in tRNA = 5-carboxymethoxyuridine(34) in tRNA + S-adenosyl-L-homocysteine + H(+). In terms of biological role, catalyzes carboxymethyl transfer from carboxy-S-adenosyl-L-methionine (Cx-SAM) to 5-hydroxyuridine (ho5U) to form 5-carboxymethoxyuridine (cmo5U) at position 34 in tRNAs. This is tRNA U34 carboxymethyltransferase from Glaesserella parasuis serovar 5 (strain SH0165) (Haemophilus parasuis).